Consider the following 470-residue polypeptide: Ras-like GTPase HI_1637 (470 aa).

The Walker A motif signature appears at Gly27–Thr34. GTP is bound by residues Ser29, Gly32, Lys33, Thr34, Ala35, Trp98, Ser101, Thr102, Arg103, Lys342, Asp344, and His345. GDP is bound by residues Gly32, Lys33, Thr34, Ala35, Trp98, Ser101, and Thr102. 5 residues coordinate GDP: Lys342, Asp344, His345, Ala383, and Val384. Val384 contacts GTP.

This sequence to E.coli YcjX. As to quaternary structure, monomer in solution. Mg(2+) is required as a cofactor.

The catalysed reaction is GTP + H2O = GDP + phosphate + H(+). With respect to regulation, alternates between an inactive form bound to GDP and an active form bound to GTP. Likely activated by a guanine nucleotide-exchange factor (GEF). Functionally, binds GTP and GDP. Has intrinsic GTPase activity. Does not hydrolyze ATP. May act as a transducer of stress responses. This Haemophilus influenzae (strain ATCC 51907 / DSM 11121 / KW20 / Rd) protein is Ras-like GTPase HI_1637.